Here is a 296-residue protein sequence, read N- to C-terminus: 4-hydroxy-tetrahydrodipicolinate synthase (296 aa).

A pyruvate-binding site is contributed by Thr49. Tyr137 serves as the catalytic Proton donor/acceptor. The Schiff-base intermediate with substrate role is filled by Lys166. Residue Ile208 coordinates pyruvate.

It belongs to the DapA family. As to quaternary structure, homotetramer; dimer of dimers.

It is found in the cytoplasm. It carries out the reaction L-aspartate 4-semialdehyde + pyruvate = (2S,4S)-4-hydroxy-2,3,4,5-tetrahydrodipicolinate + H2O + H(+). Its pathway is amino-acid biosynthesis; L-lysine biosynthesis via DAP pathway; (S)-tetrahydrodipicolinate from L-aspartate: step 3/4. Its function is as follows. Catalyzes the condensation of (S)-aspartate-beta-semialdehyde [(S)-ASA] and pyruvate to 4-hydroxy-tetrahydrodipicolinate (HTPA). This Chlorobium limicola (strain DSM 245 / NBRC 103803 / 6330) protein is 4-hydroxy-tetrahydrodipicolinate synthase.